We begin with the raw amino-acid sequence, 470 residues long: MAAEKIETVVAGNYLEMEREEENISGNKKSSTKTKLSNFFWHGGSVYDAWFSCASNQVAQVLLTLPYSFSQLGMMSGILFQLFYGLMGSWTAYLISVLYVEYRTRKEREKFDFRNHVIQWFEVLDGLLGKHWRNLGLIFNCTFLLFGSVIQLIACASNIYYINDKLDKRTWTYIFGACCATTVFIPSFHNYRIWSFLGLAMTTYTSWYLTIASLLHGQAEDVKHSGPTTMVLYFTGATNILYTFGGHAVTVEIMHAMWKPQKFKAIYLLATIYVLTLTLPSASAVYWAFGDKLLTHSNALSLLPKTGFRDTAVILMLIHQFITFGFASTPLYFVWEKLIGVHETKSMFKRAMARLPVVVPIWFLAIIFPFFGPINSAVGSLLVSFTVYIIPALAHMLTFAPAPSRENAVERPPRVVGGWMGTYCINIFVVVWVFVVGFGFGGWASMVNFVRQIDTFGLFTKCYQCPPHKP.

Residues 1-57 (MAAEKIETVVAGNYLEMEREEENISGNKKSSTKTKLSNFFWHGGSVYDAWFSCASNQ) are Cytoplasmic-facing. A helical membrane pass occupies residues 58 to 75 (VAQVLLTLPYSFSQLGMM). At 76–77 (SG) the chain is on the extracellular side. The helical transmembrane segment at 78–98 (ILFQLFYGLMGSWTAYLISVL) threads the bilayer. Topologically, residues 99–134 (YVEYRTRKEREKFDFRNHVIQWFEVLDGLLGKHWRN) are cytoplasmic. The chain crosses the membrane as a helical span at residues 135-155 (LGLIFNCTFLLFGSVIQLIAC). Residues 156-170 (ASNIYYINDKLDKRT) lie on the Extracellular side of the membrane. The chain crosses the membrane as a helical span at residues 171–191 (WTYIFGACCATTVFIPSFHNY). Position 192 (Arg192) is a topological domain, cytoplasmic. Residues 193-213 (IWSFLGLAMTTYTSWYLTIAS) traverse the membrane as a helical segment. Residues 214–230 (LLHGQAEDVKHSGPTTM) lie on the Extracellular side of the membrane. Residues 231–251 (VLYFTGATNILYTFGGHAVTV) form a helical membrane-spanning segment. At 252-264 (EIMHAMWKPQKFK) the chain is on the cytoplasmic side. The helical transmembrane segment at 265-285 (AIYLLATIYVLTLTLPSASAV) threads the bilayer. The Extracellular portion of the chain corresponds to 286 to 312 (YWAFGDKLLTHSNALSLLPKTGFRDTA). Residues 313–333 (VILMLIHQFITFGFASTPLYF) traverse the membrane as a helical segment. The Cytoplasmic portion of the chain corresponds to 334–354 (VWEKLIGVHETKSMFKRAMAR). A helical transmembrane segment spans residues 355–375 (LPVVVPIWFLAIIFPFFGPIN). Ser376 is a topological domain (extracellular). A helical transmembrane segment spans residues 377-397 (AVGSLLVSFTVYIIPALAHML). At 398-426 (TFAPAPSRENAVERPPRVVGGWMGTYCIN) the chain is on the cytoplasmic side. A helical membrane pass occupies residues 427–447 (IFVVVWVFVVGFGFGGWASMV). Residues 448–470 (NFVRQIDTFGLFTKCYQCPPHKP) lie on the Extracellular side of the membrane.

This sequence belongs to the amino acid/polyamine transporter 2 family. Amino acid/auxin permease (AAAP) (TC 2.A.18.1) subfamily.

Its subcellular location is the cell membrane. Functionally, carrier protein involved in proton-driven auxin influx. Mediates the formation of auxin gradient from developing leaves (site of auxin biosynthesis) to tips by contributing to the loading of auxin in vascular tissues and facilitating acropetal (base to tip) auxin transport within inner tissues of the root apex, and basipetal (tip to base) auxin transport within outer tissues of the root apex. This Arabidopsis thaliana (Mouse-ear cress) protein is Auxin transporter-like protein 3 (LAX3).